We begin with the raw amino-acid sequence, 367 residues long: MTPTETFYEVMRRQGVTRRSFLKFCSLTATALGLGPAYTSEIAHAMETKPRTPVLWLHGLECTCCSESFIRSAHPLVKDVVLSMISLDYDDTLMAAAGHQAEAALADTIERYKGNYILAVEGNPPLNEDGMFCIIGGKPFVDQLRYAAKHAKAIISWGSCASHGCVQAARPNPTRATPVHQVITDKPIIKVPGCPPIAEVMTGVITYMLTFGKLPELDRTGRPKMFYSQRIHDKCYRRPHFDAGQFVESFDDEGARRGYCLYKVGCKGPTTYNACSTIRWNEGTSFPIQAGHGCIGCSEEGFWDKGSWYARLQDIHQFGIEANADQIGGTVAVGAAGAVAAHAAVSALKRAQTKRQTTTTTTPKEHV.

Positions 1–45 (MTPTETFYEVMRRQGVTRRSFLKFCSLTATALGLGPAYTSEIAHA) form a signal peptide, tat-type signal. [4Fe-4S] cluster contacts are provided by Cys-62, Cys-65, Cys-160, Cys-194, His-232, Cys-235, Cys-260, and Cys-266. [3Fe-4S] cluster contacts are provided by Cys-275, Cys-294, and Cys-297.

It belongs to the [NiFe]/[NiFeSe] hydrogenase small subunit family. As to quaternary structure, heterodimer of a large and a small subunit. The cofactor is [4Fe-4S] cluster. [3Fe-4S] cluster is required as a cofactor. Predicted to be exported by the Tat system. The position of the signal peptide cleavage has been experimentally proven.

It is found in the cell membrane. The enzyme catalyses H2 + A = AH2. Functionally, this enzyme recycles the H(2) produced by nitrogenase to increase the production of ATP and to protect nitrogenase against inhibition or damage by O(2) under carbon- or phosphate-limited conditions. This Afipia carboxidovorans (strain ATCC 49405 / DSM 1227 / KCTC 32145 / OM5) (Oligotropha carboxidovorans) protein is Uptake hydrogenase small subunit (hoxS).